The sequence spans 196 residues: HTH-type transcriptional regulator BetI (196 aa).

In terms of domain architecture, HTH tetR-type spans Glu-8–Leu-68. Positions Thr-31–Phe-50 form a DNA-binding region, H-T-H motif.

Its pathway is amine and polyamine biosynthesis; betaine biosynthesis via choline pathway [regulation]. Functionally, repressor involved in the biosynthesis of the osmoprotectant glycine betaine. It represses transcription of the choline transporter BetT and the genes of BetAB involved in the synthesis of glycine betaine. In Paraburkholderia phymatum (strain DSM 17167 / CIP 108236 / LMG 21445 / STM815) (Burkholderia phymatum), this protein is HTH-type transcriptional regulator BetI.